The following is a 532-amino-acid chain: Eukaryotic translation initiation factor 4B1 (532 aa).

Disordered stretches follow at residues 16–365 (EAER…LEEQ), 401–434 (KKLE…IIRG), and 451–532 (RFRQ…REGW). Residues 26–35 (AEATAATADT) show a composition bias toward low complexity. Gly residues-rich tracts occupy residues 105–120 (RLGG…SGGR) and 132–147 (WSGG…YGGG). The segment covering 167-180 (RADEVDDWGKEKKP) has biased composition (basic and acidic residues). Residues 177 to 184 (EKKPLPSF) carry the Nuclear localization signal 1 motif. Positions 193–217 (SGDGGGFGGGGSGFGGGGGGGGGGL) are enriched in gly residues. The Nuclear localization signal 2 signature appears at 237-244 (SSTFGSSF). Residues 237-247 (SSTFGSSFGDS) are compositionally biased toward low complexity. Basic and acidic residues-rich tracts occupy residues 249-263 (QEER…RKVE) and 286-310 (RPRE…EAKK). Low complexity predominate over residues 315–337 (TSRPTSAHSSRPSSAQSNRSESS). Basic and acidic residues-rich tracts occupy residues 355–365 (AKPREVLLEEQ), 401–416 (KKLE…KESD), 472–494 (ERTH…ERPR), and 507–520 (NEQR…KERG).

This sequence belongs to the eIF-4 subunit B family. As to quaternary structure, homodimer. Nonspherical monomer. mRNA-discriminating component of initiation complexes. Post-translationally, phosphorylated.

It is found in the nucleus. Its function is as follows. Promotes the eIF4F and eIF4A RNA-dependent ATP-hydrolysis activity with different efficiency depending on mRNAs, thus providing mRNA discrimination during initiation of translation. The sequence is that of Eukaryotic translation initiation factor 4B1 from Arabidopsis thaliana (Mouse-ear cress).